The sequence spans 377 residues: Succinyl-diaminopimelate desuccinylase (377 aa).

H66 lines the Zn(2+) pocket. D68 is a catalytic residue. D99 contributes to the Zn(2+) binding site. E133 functions as the Proton acceptor in the catalytic mechanism. The Zn(2+) site is built by E134, E162, and H348.

Belongs to the peptidase M20A family. DapE subfamily. Homodimer. It depends on Zn(2+) as a cofactor. Co(2+) serves as cofactor.

It carries out the reaction N-succinyl-(2S,6S)-2,6-diaminopimelate + H2O = (2S,6S)-2,6-diaminopimelate + succinate. It functions in the pathway amino-acid biosynthesis; L-lysine biosynthesis via DAP pathway; LL-2,6-diaminopimelate from (S)-tetrahydrodipicolinate (succinylase route): step 3/3. In terms of biological role, catalyzes the hydrolysis of N-succinyl-L,L-diaminopimelic acid (SDAP), forming succinate and LL-2,6-diaminopimelate (DAP), an intermediate involved in the bacterial biosynthesis of lysine and meso-diaminopimelic acid, an essential component of bacterial cell walls. This chain is Succinyl-diaminopimelate desuccinylase, found in Methylococcus capsulatus (strain ATCC 33009 / NCIMB 11132 / Bath).